The primary structure comprises 1019 residues: Protein HIRA (1019 aa).

7 WD repeats span residues 11–53, 68–107, 129–168, 172–211, 220–263, 266–322, and 326–367; these read HNGK…KEED, NHLACVNCVRWSNNGVYLASGGDDKLIMVWKRAAYIGPST, SHSGDVMDVAWSPHDAWLASCSVDNTVVIWNAVKFPEILA, GHSGLVKGLTWDPVGKYIASQADDRSLKVWRTMDWQLETS, GGTT…TNMD, GHRK…PLVV, and LFDK…DPLS. Residues 23–443 are interaction with RBBP4; sequence PDGTKFATGG…ASMVNGESLE (421 aa). Composition is skewed to low complexity over residues 406 to 415 and 544 to 561; these read QRQQQQQAEQ and ATSVSTAPPASSSSVLTT. 3 disordered regions span residues 406-433, 513-561, and 599-633; these read QRQQQQQAEQKNASIREASGAATTAPKV, ANSL…VLTT, and LKDQNLIKDNKPKDILESSSDSEEKIPAAKPLSAP. Residues 444–1019 are interaction with HDAC1; the sequence is DIRKNLLKKQ…TEYQEQLDIL (576 aa). Positions 599-625 are enriched in basic and acidic residues; it reads LKDQNLIKDNKPKDILESSSDSEEKIP. The segment at 960-1019 is interaction with HDAC2; sequence RLRELCKDLLGPVHYSRGSQWESTVMGLRKRELLKELLPVIGQNLFQRLFTEYQEQLDIL.

It belongs to the WD repeat HIR1 family. Interacts with ASF1, HDAC1, HDAC2 and RBBP4.

It is found in the nucleus. Functionally, cooperates with ASF1A to promote replication-independent chromatin assembly. May regulate the transcription of a variety of genes controlling cell growth. This chain is Protein HIRA (HIRA), found in Gallus gallus (Chicken).